The sequence spans 224 residues: MADS-box transcription factor 16 (224 aa).

Positions 1–61 constitute an MADS-box domain; it reads MGRGKIEIKR…GKYHEFCSPS (61 aa). Residues 84 to 174 enclose the K-box domain; that stretch reads YENMQRTLSH…QQELGLREEP (91 aa).

As to quaternary structure, may interact with the K-box of MADS4, MADS6 and MADS8. May form a heterodimer with MADS4. As to expression, expressed in lodicules, stamens and carpels.

It is found in the nucleus. Probable transcription factor involved in the development of floral organs. Required for normal development of lodicules and stamens (whorls 2 and 3). May function as a heterodimer with MADS4. The sequence is that of MADS-box transcription factor 16 (MADS16) from Oryza sativa subsp. japonica (Rice).